A 259-amino-acid chain; its full sequence is DNA terminal protein (259 aa).

Y190 carries the post-translational modification O-(5'-phospho-DNA)-tyrosine. The short motif at K243–V259 is the Nuclear localization signal element.

Belongs to the tectivirus DNA terminal protein family. As to quaternary structure, heterodimer with viral polymerase. Binds to ssDNA.

Its subcellular location is the virion. The protein resides in the host nucleus. Functionally, acts as a primer for viral genomic replication. DNA terminal protein is covalently linked to the 5'-ends of both strands of the genome through a phosphodiester bond between the beta-hydroxyl group of a tyrosine residue and the 5'-phosphate of the terminal deoxyadenylate. This protein is essential for DNA replication and is involved in the priming of DNA elongation. The chain is DNA terminal protein (VIII) from Enterobacteria phage PRD1 (Bacteriophage PRD1).